The primary structure comprises 1418 residues: Ankyrin repeat and fibronectin type-III domain-containing protein 1 (1418 aa).

The segment at 119–236 is disordered; that stretch reads RDSVCSLPPP…DRGETPSLSE (118 aa). Polar residues predominate over residues 144–154; the sequence is PENTSINLSQC. A compositionally biased stretch (low complexity) spans 171–186; the sequence is SASPTSSTPLRTTSTP. A compositionally biased stretch (basic and acidic residues) spans 223–236; sequence LRDHDRGETPSLSE. 2 ANK repeats span residues 419 to 450 and 456 to 485; these read QSSE…ELDL and EGLT…KESP. Positions 556–652 constitute a Fibronectin type-III domain; it reads APLMVRLSVT…LSQPPSAVPS (97 aa). The highly conserved peptide sequence stretch occupies residues 893 to 900; the sequence is GLYLGYLK. Disordered stretches follow at residues 1134–1179, 1321–1343, and 1361–1418; these read VQKN…EVFL, LETP…YRQP, and KTSP…SSTL. Over residues 1136–1146 the composition is skewed to polar residues; that stretch reads KNDSTSSNTDY. Over residues 1407-1418 the composition is skewed to polar residues; that stretch reads NEQVSEILSSTL.

Its function is as follows. Required for vestibular-related functions. This chain is Ankyrin repeat and fibronectin type-III domain-containing protein 1 (ankfn1), found in Danio rerio (Zebrafish).